The following is a 266-amino-acid chain: Derlin-1 (266 aa).

Over Met1–Thr20 the chain is Cytoplasmic. Residues Leu21 to Leu41 form a helical membrane-spanning segment. Topologically, residues Ile42–Leu55 are lumenal. The helical transmembrane segment at Ile56 to Ile76 threads the bilayer. The Cytoplasmic portion of the chain corresponds to Ala77–Asp94. A helical membrane pass occupies residues Phe95 to Phe115. Topologically, residues Trp116 to Trp156 are lumenal. The chain crosses the membrane as a helical span at residues Ala157–Ile177. Topologically, residues Ala178 to Asp266 are cytoplasmic. The interval Gly235–Asp266 is disordered.

It belongs to the derlin family.

It is found in the endoplasmic reticulum membrane. May be involved in the degradation process of specific misfolded endoplasmic reticulum (ER) luminal proteins. This Arabidopsis thaliana (Mouse-ear cress) protein is Derlin-1 (DER1).